We begin with the raw amino-acid sequence, 279 residues long: Tryptophan synthase alpha chain (279 aa).

Residues Glu-50 and Asp-61 each act as proton acceptor in the active site.

Belongs to the TrpA family. Tetramer of two alpha and two beta chains.

It catalyses the reaction (1S,2R)-1-C-(indol-3-yl)glycerol 3-phosphate + L-serine = D-glyceraldehyde 3-phosphate + L-tryptophan + H2O. Its pathway is amino-acid biosynthesis; L-tryptophan biosynthesis; L-tryptophan from chorismate: step 5/5. Functionally, the alpha subunit is responsible for the aldol cleavage of indoleglycerol phosphate to indole and glyceraldehyde 3-phosphate. This Brucella abortus (strain S19) protein is Tryptophan synthase alpha chain.